The chain runs to 338 residues: N-acetyl-gamma-glutamyl-phosphate reductase (338 aa).

Cys-148 is an active-site residue.

It belongs to the NAGSA dehydrogenase family. Type 1 subfamily.

It is found in the cytoplasm. It carries out the reaction N-acetyl-L-glutamate 5-semialdehyde + phosphate + NADP(+) = N-acetyl-L-glutamyl 5-phosphate + NADPH + H(+). It participates in amino-acid biosynthesis; L-arginine biosynthesis; N(2)-acetyl-L-ornithine from L-glutamate: step 3/4. Its function is as follows. Catalyzes the NADPH-dependent reduction of N-acetyl-5-glutamyl phosphate to yield N-acetyl-L-glutamate 5-semialdehyde. This chain is N-acetyl-gamma-glutamyl-phosphate reductase, found in Leptospira borgpetersenii serovar Hardjo-bovis (strain JB197).